The primary structure comprises 353 residues: Peroxidase 34 (353 aa).

The first 30 residues, 1–30 (MHFSSSSTSSTWTILITLGCLMLHASLSAA), serve as a signal peptide directing secretion. Position 31 is a pyrrolidone carboxylic acid (Q31). Disulfide bonds link C41–C121, C74–C79, C127–C331, and C207–C239. A glycan (N-linked (GlcNAc...) asparagine) is linked at N43. H72 (proton acceptor) is an active-site residue. Ca(2+) contacts are provided by D73, V76, G78, D80, and S82. An N-linked (GlcNAc...) asparagine glycan is attached at N87. Position 169 (P169) interacts with substrate. H200 is a heme b binding site. T201 lines the Ca(2+) pocket. N216, N228, and N244 each carry an N-linked (GlcNAc...) asparagine glycan. Ca(2+) is bound by residues D252, T255, and D260. A glycan (N-linked (GlcNAc...) asparagine) is linked at N285.

This sequence belongs to the peroxidase family. Classical plant (class III) peroxidase subfamily. Requires heme b as cofactor. Ca(2+) serves as cofactor. Preferentially expressed in roots, but also detected in flowers, leaves and stems.

The protein localises to the secreted. It is found in the vacuole. It carries out the reaction 2 a phenolic donor + H2O2 = 2 a phenolic radical donor + 2 H2O. Functionally, removal of H(2)O(2), oxidation of toxic reductants, biosynthesis and degradation of lignin, suberization, auxin catabolism, response to environmental stresses such as wounding, pathogen attack and oxidative stress. These functions might be dependent on each isozyme/isoform in each plant tissue. Its function is as follows. May be implicated in the systemic acquired resistance response via the salicylic acid signal transduction pathway. Exhibits a Ca(2+)-pectate binding affinity which could be interpreted in vivo as a specificity to interact with the pectic structure of the cell wall. In Arabidopsis thaliana (Mouse-ear cress), this protein is Peroxidase 34 (PER34).